Here is a 655-residue protein sequence, read N- to C-terminus: Inactive serine protease scarface (655 aa).

A signal peptide spans Met1–Gly24. 2 stretches are compositionally biased toward polar residues: residues Thr213 to Val225 and Pro237 to Arg252. The disordered stretch occupies residues Thr213–Arg319. Positions Lys343–Asn407 are CLIP. Intrachain disulfides connect Cys344–Cys394, Cys350–Cys383, Cys356–Cys395, Cys450–Cys466, Cys547–Cys605, Cys579–Cys587, and Cys595–Cys623. Positions Pro421 to Ala644 constitute a Peptidase S1 domain.

The protein belongs to the peptidase S1 family.

The protein localises to the secreted. Functionally, inactive serine protease that plays a role in germ-band retraction and dorsal closure morphogenesis in embryogenesis; contributes to amnioserosa attachment and epithelial apico-basal polarity by regulating the localization of laminin LanA on the apical side of the amnioserosa epithelium. Contributes to epithelial morphogenesis probably by regulating the bsk/JNK pathway, as part of a negative-feedback loop, and by modulating the cross-talk between the Egfr, bsk/JNK and dpp signal transduction pathways. In larval development, antagonizes the morphogenetic movements controlled by the bsk/JNK signaling including male genitalia formation and thorax development. The chain is Inactive serine protease scarface from Drosophila melanogaster (Fruit fly).